The chain runs to 189 residues: Phosphoheptose isomerase (189 aa).

Residues 34 to 189 enclose the SIS domain; that stretch reads LVEAFRKGNK…CDLVEKALFA (156 aa). Residue 49-51 coordinates substrate; sequence NGG. Residues H58 and E62 each contribute to the Zn(2+) site. Substrate is bound by residues E62, 91–92, 117–119, S122, and Q169; these read ND and STS. Zn(2+) contacts are provided by Q169 and H177.

It belongs to the SIS family. GmhA subfamily. As to quaternary structure, homotetramer. The cofactor is Zn(2+).

The protein resides in the cytoplasm. The enzyme catalyses 2 D-sedoheptulose 7-phosphate = D-glycero-alpha-D-manno-heptose 7-phosphate + D-glycero-beta-D-manno-heptose 7-phosphate. The protein operates within carbohydrate biosynthesis; D-glycero-D-manno-heptose 7-phosphate biosynthesis; D-glycero-alpha-D-manno-heptose 7-phosphate and D-glycero-beta-D-manno-heptose 7-phosphate from sedoheptulose 7-phosphate: step 1/1. Its function is as follows. Catalyzes the isomerization of sedoheptulose 7-phosphate in D-glycero-D-manno-heptose 7-phosphate. The polypeptide is Phosphoheptose isomerase (Pelobacter propionicus (strain DSM 2379 / NBRC 103807 / OttBd1)).